The following is a 209-amino-acid chain: Protein TIFY 11c (209 aa).

Residues 93–128 (EITEKAQLTIFYGGSVVVFDDFPAEKAGELMKLAGS) enclose the Tify domain. Positions 153-177 (PIARKVSLQRFLEKRKNRIVVAEPL) match the Jas motif. Residues 155 to 162 (ARKVSLQR) carry the Nuclear localization signal motif. Positions 175-209 (EPLPESEKKEAESSKRAKKDDGGASWLQVNPTLSL) are disordered. Positions 179-196 (ESEKKEAESSKRAKKDDG) are enriched in basic and acidic residues.

It belongs to the TIFY/JAZ family. Ubiquitinated. Targeted for degradation by the SCF(COI1) E3 ubiquitin ligase-proteasome pathway during jasmonate signaling.

The protein resides in the nucleus. In terms of biological role, repressor of jasmonate responses. This Oryza sativa subsp. indica (Rice) protein is Protein TIFY 11c.